Consider the following 456-residue polypeptide: tRNA modification GTPase MnmE (456 aa).

The (6S)-5-formyl-5,6,7,8-tetrahydrofolate site is built by Arg-24, Glu-81, and Lys-120. A TrmE-type G domain is found at 216–379; that stretch reads GMTVVIAGRP…LRDHLKACMG (164 aa). Asn-226 contributes to the K(+) binding site. Residues 226–231, 245–251, 270–273, and 335–338 contribute to the GTP site; these read NAGKSS, TDIAGTT, DTAG, and NKAD. Ser-230 contacts Mg(2+). Residues Thr-245, Ile-247, and Thr-250 each coordinate K(+). Thr-251 lines the Mg(2+) pocket. Lys-456 serves as a coordination point for (6S)-5-formyl-5,6,7,8-tetrahydrofolate.

The protein belongs to the TRAFAC class TrmE-Era-EngA-EngB-Septin-like GTPase superfamily. TrmE GTPase family. As to quaternary structure, homodimer. Heterotetramer of two MnmE and two MnmG subunits. K(+) is required as a cofactor.

It is found in the cytoplasm. Functionally, exhibits a very high intrinsic GTPase hydrolysis rate. Involved in the addition of a carboxymethylaminomethyl (cmnm) group at the wobble position (U34) of certain tRNAs, forming tRNA-cmnm(5)s(2)U34. The protein is tRNA modification GTPase MnmE of Pseudomonas fluorescens (strain ATCC BAA-477 / NRRL B-23932 / Pf-5).